A 76-amino-acid polypeptide reads, in one-letter code: Exodeoxyribonuclease 7 small subunit (76 aa).

Belongs to the XseB family. As to quaternary structure, heterooligomer composed of large and small subunits.

It is found in the cytoplasm. It catalyses the reaction Exonucleolytic cleavage in either 5'- to 3'- or 3'- to 5'-direction to yield nucleoside 5'-phosphates.. Its function is as follows. Bidirectionally degrades single-stranded DNA into large acid-insoluble oligonucleotides, which are then degraded further into small acid-soluble oligonucleotides. The chain is Exodeoxyribonuclease 7 small subunit from Bacillus cytotoxicus (strain DSM 22905 / CIP 110041 / 391-98 / NVH 391-98).